The chain runs to 112 residues: UPF0145 protein MmarC6_1828 (112 aa).

Belongs to the UPF0145 family.

The protein is UPF0145 protein MmarC6_1828 of Methanococcus maripaludis (strain C6 / ATCC BAA-1332).